We begin with the raw amino-acid sequence, 119 residues long: Microtubule nucleation factor SSNA1 (119 aa).

N-acetylthreonine is present on Thr-2. Residues 2–32 (TQQGAALQNYNNELVKCIEELCQKREELCRQ) are important for localization to the centrosome. Positions 13 to 70 (NELVKCIEELCQKREELCRQIQEEEDEKQRLQNEVRQLTEKLARVNENLARKIASRNE) form a coiled coil.

Belongs to the SSNA1 family. Self-associates to form fibrils. Also forms dimers as well as monomers. Interacts with SPAST. In terms of tissue distribution, widely expressed.

The protein localises to the nucleus. Its subcellular location is the cytoplasm. It is found in the cytoskeleton. The protein resides in the microtubule organizing center. It localises to the centrosome. The protein localises to the centriole. Its subcellular location is the midbody. It is found in the flagellum basal body. The protein resides in the flagellum axoneme. It localises to the cell projection. The protein localises to the axon. Microtubule-binding protein which stabilizes dynamic microtubules by slowing growth and shrinkage at both plus and minus ends and serves as a sensor of microtubule damage, protecting microtubules from the microtubule-severing enzyme SPAST. Induces microtubule branching which is mediated by the formation of long SSNA1 fibrils which guide microtubule protofilaments to split apart from the mother microtubule and form daughter microtubules. Plays a role in axon outgrowth and branching. Required for cell division. This is Microtubule nucleation factor SSNA1 from Homo sapiens (Human).